The sequence spans 156 residues: Cell division protein SepF (156 aa).

Positions Ser-23 to Asp-36 are enriched in basic and acidic residues. The tract at residues Ser-23–Ala-48 is disordered. Over residues Pro-37–Ala-48 the composition is skewed to polar residues.

This sequence belongs to the SepF family. Homodimer. Interacts with FtsZ.

The protein resides in the cytoplasm. Functionally, cell division protein that is part of the divisome complex and is recruited early to the Z-ring. Probably stimulates Z-ring formation, perhaps through the cross-linking of FtsZ protofilaments. Its function overlaps with FtsA. This chain is Cell division protein SepF, found in Bacillus cereus (strain ATCC 10987 / NRS 248).